The sequence spans 131 residues: MRLDILLFTLSSSTSLALSYSLPMDPAHSSVHTLSAADRHIGERVTRQRHLREEPANEARNYSDLAVEIKRLVEELDSRVLEQADISLLDRHYAGDYKAFRSDLMTYGYQTRFAEQYKLFKKLGIDFKHNY.

The first 19 residues, 1-19, serve as a signal peptide directing secretion; it reads MRLDILLFTLSSSTSLALS. Residues 49–60 carry the RxLR-dEER motif; the sequence is RHLREEPANEAR. Asparagine 61 carries an N-linked (GlcNAc...) asparagine glycan.

It belongs to the RxLR effector family.

The protein localises to the secreted. Its subcellular location is the host cell. Its function is as follows. Secreted effector that suppresses callose deposition, a hallmark of pathogen-associated molecular pattern (PAMP)-triggered immunity (PTI) and renders host plants more susceptible to bacterial infection. Reduces host plant responsiveness to salicylic acid (SA) in haustoriated cells into which host-translocated effectors are delivered. The sequence is that of RxLR effector protein 62 from Hyaloperonospora arabidopsidis (strain Emoy2) (Downy mildew agent).